Reading from the N-terminus, the 430-residue chain is Adenylosuccinate synthetase (430 aa).

GTP-binding positions include 12 to 18 (GDEGKGK) and 40 to 42 (GHT). The active-site Proton acceptor is Asp-13. Mg(2+) contacts are provided by Asp-13 and Gly-40. Residues 13–16 (DEGK), 38–41 (NAGH), Thr-128, Arg-142, Gln-223, Thr-238, and Arg-302 each bind IMP. His-41 (proton donor) is an active-site residue. 298 to 304 (TTTGRPR) contacts substrate. GTP-binding positions include Arg-304, 330-332 (SID), and 412-414 (SVG).

Belongs to the adenylosuccinate synthetase family. Homodimer. Requires Mg(2+) as cofactor.

It localises to the cytoplasm. It carries out the reaction IMP + L-aspartate + GTP = N(6)-(1,2-dicarboxyethyl)-AMP + GDP + phosphate + 2 H(+). It participates in purine metabolism; AMP biosynthesis via de novo pathway; AMP from IMP: step 1/2. In terms of biological role, plays an important role in the de novo pathway of purine nucleotide biosynthesis. Catalyzes the first committed step in the biosynthesis of AMP from IMP. The protein is Adenylosuccinate synthetase of Streptococcus pyogenes serotype M4 (strain MGAS10750).